A 305-amino-acid polypeptide reads, in one-letter code: Glycerol-3-phosphate dehydrogenase [NAD(P)+] (305 aa).

NADPH contacts are provided by Trp-11, Arg-31, and Lys-79. Sn-glycerol 3-phosphate-binding residues include Lys-79 and Gly-107. Ala-111 is a binding site for NADPH. Sn-glycerol 3-phosphate contacts are provided by Lys-162, Asp-215, Ser-225, Arg-226, and Asn-227. The active-site Proton acceptor is Lys-162. NADPH is bound at residue Arg-226. NADPH is bound at residue Glu-252.

The protein belongs to the NAD-dependent glycerol-3-phosphate dehydrogenase family.

Its subcellular location is the cytoplasm. The catalysed reaction is sn-glycerol 3-phosphate + NAD(+) = dihydroxyacetone phosphate + NADH + H(+). The enzyme catalyses sn-glycerol 3-phosphate + NADP(+) = dihydroxyacetone phosphate + NADPH + H(+). It functions in the pathway membrane lipid metabolism; glycerophospholipid metabolism. Catalyzes the reduction of the glycolytic intermediate dihydroxyacetone phosphate (DHAP) to sn-glycerol 3-phosphate (G3P), the key precursor for phospholipid synthesis. This Gloeobacter violaceus (strain ATCC 29082 / PCC 7421) protein is Glycerol-3-phosphate dehydrogenase [NAD(P)+].